The sequence spans 428 residues: Adenylosuccinate synthetase (428 aa).

Residues 12-18 (GDEGKGK) and 40-42 (GHS) each bind GTP. The active-site Proton acceptor is aspartate 13. Mg(2+) contacts are provided by aspartate 13 and glycine 40. Residues 13–16 (DEGK), 38–41 (NAGH), threonine 128, arginine 142, glutamine 223, threonine 238, and arginine 302 contribute to the IMP site. The active-site Proton donor is histidine 41. 298–304 (VTTGRPR) lines the substrate pocket. Residues arginine 304, 330–332 (KLD), and 412–414 (GTG) contribute to the GTP site.

It belongs to the adenylosuccinate synthetase family. In terms of assembly, homodimer. Requires Mg(2+) as cofactor.

It localises to the cytoplasm. It carries out the reaction IMP + L-aspartate + GTP = N(6)-(1,2-dicarboxyethyl)-AMP + GDP + phosphate + 2 H(+). It functions in the pathway purine metabolism; AMP biosynthesis via de novo pathway; AMP from IMP: step 1/2. Plays an important role in the de novo pathway of purine nucleotide biosynthesis. Catalyzes the first committed step in the biosynthesis of AMP from IMP. This Bifidobacterium longum (strain NCC 2705) protein is Adenylosuccinate synthetase.